Here is a 758-residue protein sequence, read N- to C-terminus: 5-methyltetrahydropteroyltriglutamate--homocysteine methyltransferase (758 aa).

5-methyltetrahydropteroyltri-L-glutamate is bound by residues 16–19 (RELK) and Lys-116. L-homocysteine is bound by residues 436–438 (IGS) and Glu-489. L-methionine-binding positions include 436–438 (IGS) and Glu-489. Residues 520–521 (RC) and Trp-566 each bind 5-methyltetrahydropteroyltri-L-glutamate. Asp-604 lines the L-homocysteine pocket. Asp-604 contributes to the L-methionine binding site. Glu-610 lines the 5-methyltetrahydropteroyltri-L-glutamate pocket. 3 residues coordinate Zn(2+): His-646, Cys-648, and Glu-670. His-699 serves as the catalytic Proton donor. A Zn(2+)-binding site is contributed by Cys-731.

This sequence belongs to the vitamin-B12 independent methionine synthase family. Zn(2+) is required as a cofactor.

It catalyses the reaction 5-methyltetrahydropteroyltri-L-glutamate + L-homocysteine = tetrahydropteroyltri-L-glutamate + L-methionine. The protein operates within amino-acid biosynthesis; L-methionine biosynthesis via de novo pathway; L-methionine from L-homocysteine (MetE route): step 1/1. In terms of biological role, catalyzes the transfer of a methyl group from 5-methyltetrahydrofolate to homocysteine resulting in methionine formation. The sequence is that of 5-methyltetrahydropteroyltriglutamate--homocysteine methyltransferase from Xylella fastidiosa (strain M23).